The chain runs to 173 residues: Crossover junction endodeoxyribonuclease RuvC (173 aa).

Residues D8, E69, and D141 contribute to the active site. D8, E69, and D141 together coordinate Mg(2+).

It belongs to the RuvC family. As to quaternary structure, homodimer which binds Holliday junction (HJ) DNA. The HJ becomes 2-fold symmetrical on binding to RuvC with unstacked arms; it has a different conformation from HJ DNA in complex with RuvA. In the full resolvosome a probable DNA-RuvA(4)-RuvB(12)-RuvC(2) complex forms which resolves the HJ. Mg(2+) is required as a cofactor.

Its subcellular location is the cytoplasm. It catalyses the reaction Endonucleolytic cleavage at a junction such as a reciprocal single-stranded crossover between two homologous DNA duplexes (Holliday junction).. Its function is as follows. The RuvA-RuvB-RuvC complex processes Holliday junction (HJ) DNA during genetic recombination and DNA repair. Endonuclease that resolves HJ intermediates. Cleaves cruciform DNA by making single-stranded nicks across the HJ at symmetrical positions within the homologous arms, yielding a 5'-phosphate and a 3'-hydroxyl group; requires a central core of homology in the junction. The consensus cleavage sequence is 5'-(A/T)TT(C/G)-3'. Cleavage occurs on the 3'-side of the TT dinucleotide at the point of strand exchange. HJ branch migration catalyzed by RuvA-RuvB allows RuvC to scan DNA until it finds its consensus sequence, where it cleaves and resolves the cruciform DNA. The chain is Crossover junction endodeoxyribonuclease RuvC from Xylella fastidiosa (strain 9a5c).